Here is a 371-residue protein sequence, read N- to C-terminus: Peptide chain release factor 2 (371 aa).

Gln-253 carries the N5-methylglutamine modification.

Belongs to the prokaryotic/mitochondrial release factor family. Methylated by PrmC. Methylation increases the termination efficiency of RF2.

The protein resides in the cytoplasm. Peptide chain release factor 2 directs the termination of translation in response to the peptide chain termination codons UGA and UAA. The protein is Peptide chain release factor 2 of Mycobacterium marinum (strain ATCC BAA-535 / M).